Reading from the N-terminus, the 564-residue chain is Keratin, type II cytoskeletal 6B (564 aa).

Over residues 1 to 11 (MASTSTTIRSH) the composition is skewed to low complexity. A disordered region spans residues 1 to 23 (MASTSTTIRSHSSSRRGFSANSA). At Ala2 the chain carries N-acetylalanine. The segment at 2–162 (ASTSTTIRSH…DPAIQRVRAE (161 aa)) is head. Residues 163-198 (EREQIKTLNNKFASFIDKVRFLEQQNKVLDTKWTLL) are coil 1A. Residues 163 to 476 (EREQIKTLNN…KLLEGEECRL (314 aa)) enclose the IF rod domain. The interval 199–217 (QEQGTKTVRQNLEPLFEQY) is linker 1. The interval 218–309 (INNLRRQLDN…ALYDAELSQM (92 aa)) is coil 1B. Residues 310–333 (QTHISDTSVVLSMDNNRNLDLDSI) form a linker 12 region. Residues 334-472 (IAEVKAQYEE…ATYRKLLEGE (139 aa)) form a coil 2 region. The segment at 473 to 564 (ECRLNGEGVG…SSSSRKSYKH (92 aa)) is tail. Residues 533-564 (RATGGGLSSVGGGSSTIKYTTTSSSSRKSYKH) form a disordered region. Residues 534-546 (ATGGGLSSVGGGS) are compositionally biased toward gly residues. The span at 547 to 564 (STIKYTTTSSSSRKSYKH) shows a compositional bias: low complexity.

This sequence belongs to the intermediate filament family. In terms of assembly, heterodimer of a type I and a type II keratin. KRT6 isomers associate with KRT16 and/or KRT17. Constitutively expressed in distinct types of epithelia such as those in oral mucosa, esophagus, papillae of tongue and hair follicle outer root sheath.

The protein is Keratin, type II cytoskeletal 6B (KRT6B) of Homo sapiens (Human).